A 161-amino-acid chain; its full sequence is uncharacterized protein (161 aa).

It belongs to the SixA phosphatase family.

This is an uncharacterized protein from Mycobacterium leprae (strain TN).